Consider the following 289-residue polypeptide: MSAKYPIISITGSSGAGTTTVKDTFEKIFKRENISASFIEGDAFHRYDRETMRSKIAEEKARGVDFTHFSAEANELEILESVFAEYGRRGVGRTRHYVHDDAEAVKFGSDPGTFTDWEEFRDSDLLFYEGLHGCAVTDTINLAQHCDLKIGVVPVINLEWIQKIHRDKATRGYSTEAVTDTILRRMPDYVHYICPQFSLTDINFQRVPIVDTSNPFIARWIPTPAESILVIRFAKPQSIDFPYLLSMLHNSYMSRANSIVVPGDKLDLAMQLIFTPLIHKLLERKHRMS.

ATP is bound at residue 12–20 (GSSGAGTTT).

The protein belongs to the phosphoribulokinase family.

The enzyme catalyses D-ribulose 5-phosphate + ATP = D-ribulose 1,5-bisphosphate + ADP + H(+). It functions in the pathway carbohydrate biosynthesis; Calvin cycle. The chain is Phosphoribulokinase (cbbP) from Sinorhizobium medicae (strain WSM419) (Ensifer medicae).